The primary structure comprises 856 residues: Histone-lysine N-methyltransferase EZA1 (856 aa).

Residues 1-11 show a composition bias toward polar residues; it reads MVTDDSNSSGR. 3 disordered regions span residues 1–34, 66–87, and 366–473; these read MVTD…GLEN, VSPF…NSNM, and NVDS…HHGS. Acidic residues predominate over residues 17 to 28; sequence DDDDDGEEEEDR. The stretch at 22 to 49 forms a coiled coil; that stretch reads GEEEEDRLEGLENRLSELKRKIQGERVR. Positions 68–87 are enriched in polar residues; it reads PFSSAASSRATAEDNGNSNM. A compositionally biased stretch (basic and acidic residues) spans 374–392; it reads EQEHGIRGKREVPILKDSN. Polar residues predominate over residues 393–419; the sequence is DLPNLSNKKQKTAASDTKMSFVNSVPS. The span at 438–451 shows a compositional bias: basic and acidic residues; that stretch reads KVNRDSEADAKEVG. The SANT domain occupies 489-539; the sequence is PSTEWNPIEKDLYLKGVEIFGRNSCLIARNLLSGLKTCLDVSNYMRENEVS. A CXC domain is found at 594–693; it reads WKRIAGGKNQ…SLGEAPRRGE (100 aa). An SET domain is found at 707 to 822; sequence QRILLGKSDV…ASEELFYDYR (116 aa). Residue Tyr-821 participates in S-adenosyl-L-methionine binding. The tract at residues 827 to 856 is disordered; it reads QAPVWARKPEGSKKDDSAITHRRARKHQSH. Basic and acidic residues predominate over residues 833-845; that stretch reads RKPEGSKKDDSAI. A Nuclear localization signal motif is present at residues 838-845; sequence SKKDDSAI. The segment covering 846–856 has biased composition (basic residues); sequence THRRARKHQSH.

Belongs to the class V-like SAM-binding methyltransferase superfamily. Histone-lysine methyltransferase family. EZ subfamily. As to quaternary structure, component of the plant homeodomain / polycomb repressive complex 2 (PHD-PRC2) large complex during prolonged cold, composed of core PRC2 components (VRN2, EZA1, FIE and MSI1), and three related PHD finger proteins (VIL1, VIL2 and VIN3) that mediates histone H3 trimethylation on 'Lys-27' H3K27me3. Interacts with TAF13. Interacts with EOL1. Interacts (via SANT domain) with HXK1 in the nucleus.

The protein resides in the nucleus. The enzyme catalyses L-lysyl(27)-[histone H3] + 3 S-adenosyl-L-methionine = N(6),N(6),N(6)-trimethyl-L-lysyl(27)-[histone H3] + 3 S-adenosyl-L-homocysteine + 3 H(+). Functionally, polycomb group (PcG) protein. Catalytic subunit of some PcG multiprotein complex, which methylates 'Lys-27' of histone H3, leading to transcriptional repression of the affected target genes, mainly abscisic acid (ABA) responsive elements. PcG proteins act by forming multiprotein complexes, which are required to maintain the transcriptionally repressive state of homeotic genes throughout development. PcG proteins are not required to initiate repression, but to maintain it during later stages of development. Forms a nuclear complex with CLF and HXK1 to target common glucose-responsive genes and regulate glucose signaling by glucose-mediated gene repression. Affects the recruitment of HXK1 to the target chromatin. The sequence is that of Histone-lysine N-methyltransferase EZA1 from Arabidopsis thaliana (Mouse-ear cress).